A 223-amino-acid polypeptide reads, in one-letter code: Noggin-3 (223 aa).

The signal sequence occupies residues 1–23 (MDNIPYFLATVLIFSLGFRIEEG). Residues N60 and N93 are each glycosylated (N-linked (GlcNAc...) asparagine).

Belongs to the noggin family. Homodimer; disulfide-linked.

It localises to the secreted. Its function is as follows. May function as an inhibitor of bone morphogenetic proteins (BMP) signaling during later stages of development including late phases of dorsoventral patterning, to refine the early pattern set up by the interaction of chordino and BMP2/4. Not involved in organizer function or early phases of dorsoventral pattern formation. This chain is Noggin-3 (nog3), found in Danio rerio (Zebrafish).